The primary structure comprises 194 residues: Peptidyl-tRNA hydrolase (194 aa).

Tyr-17 provides a ligand contact to tRNA. His-22 serves as the catalytic Proton acceptor. TRNA is bound by residues Phe-68, Asn-70, and Asn-116.

This sequence belongs to the PTH family. In terms of assembly, monomer.

It is found in the cytoplasm. The enzyme catalyses an N-acyl-L-alpha-aminoacyl-tRNA + H2O = an N-acyl-L-amino acid + a tRNA + H(+). In terms of biological role, hydrolyzes ribosome-free peptidyl-tRNAs (with 1 or more amino acids incorporated), which drop off the ribosome during protein synthesis, or as a result of ribosome stalling. Catalyzes the release of premature peptidyl moieties from peptidyl-tRNA molecules trapped in stalled 50S ribosomal subunits, and thus maintains levels of free tRNAs and 50S ribosomes. The sequence is that of Peptidyl-tRNA hydrolase from Mannheimia succiniciproducens (strain KCTC 0769BP / MBEL55E).